Here is a 335-residue protein sequence, read N- to C-terminus: Zinc finger protein CO3 (335 aa).

Cys15, Cys18, Cys38, and His43 together coordinate Zn(2+). Residues 15–57 form a B box-type; atypical zinc finger; it reads CDSCRSAPCAFYCLADSAALCATCDADVHSVNPLARRHRRVPM. The tract at residues 141 to 179 is disordered; that stretch reads AGEKEDASSSKDCSSSHGKSSEGSHEFAVPGEPVPERQG. In terms of domain architecture, CCT spans 268-310; it reads REARVHRYREKRKTRRFEKTIRYASRKAYAETRPRIKGRFAKR.

This sequence belongs to the CONSTANS family.

The protein resides in the nucleus. Probable transcription factor involved in the regulation of flowering time under short day (SD) conditions. Functions as a repressor of flowering under SD conditions, independently of HD1, EHD1, MADS50 and MADS51. Controls flowering time under SD conditions by negatively regulating the expression of HD3A and FTL. The polypeptide is Zinc finger protein CO3 (Oryza sativa subsp. japonica (Rice)).